A 257-amino-acid chain; its full sequence is Snake venom serine protease CL5 (257 aa).

The first 18 residues, 1 to 18 (MVLIRVLANLLILQLSYA), serve as a signal peptide directing secretion. A propeptide spanning residues 19–24 (QRSSEL) is cleaved from the precursor. The Peptidase S1 domain occupies 25–248 (VIGGDECNIN…HLDWIQSIIA (224 aa)). 5 cysteine pairs are disulfide-bonded: cysteine 31–cysteine 162, cysteine 49–cysteine 65, cysteine 141–cysteine 209, cysteine 173–cysteine 188, and cysteine 199–cysteine 224. The Charge relay system role is filled by histidine 64. N-linked (GlcNAc...) asparagine glycosylation is found at asparagine 78 and asparagine 102. The active-site Charge relay system is the aspartate 109. Residues asparagine 153 and asparagine 169 are each glycosylated (N-linked (GlcNAc...) asparagine). Serine 203 (charge relay system) is an active-site residue. Residue asparagine 250 is glycosylated (N-linked (GlcNAc...) asparagine).

Belongs to the peptidase S1 family. Snake venom subfamily. As to quaternary structure, monomer. In terms of tissue distribution, expressed by the venom gland.

The protein localises to the secreted. Snake venom serine protease that may act in the hemostasis system of the prey. This is Snake venom serine protease CL5 from Trimeresurus stejnegeri (Chinese green tree viper).